The chain runs to 633 residues: MAVASEALLQKLTESWKNSRFEELQREADEAAAEIEKMQKTSLDERKELSSKTKEFRKQPDEVKLGEMKGLLKLYQSGIDSLTKRAKSAEATFFRVYETLGEVPDPYPLLIEAANNLKTQKQIEDLKKEKEEMEGSLQGKEKLEREVENLRKELDKYKDLVETEAEKRAAITKEECEKSWLEQQKLYKDMEQENASTIQKLTSKIRELQASQLDHDLQASQNESAGLDVNAKSAEVNAILSELDDANKIIVELQAEIAVLKQNTKEQKSGSSQDDLSNQQKQQLDFMDSLNKKLSTELESIKEASRKEMETHCATIQTLENEVKEARKVKEESLTLANKFSDYDEIKRELSVLKQIEFSGEHATHENTSLESQLLKREKQLSEELAKLRSTNAQLTDRITQESKKASFLEQKASEQEEVIRKLEKDLADVDVEGSVYLSNTTYRREGTSGQLSPTSSIMGGNPSLFNGSVLSRNSVNETGSAIVDVIKQQRDRFRRANVTLVNQVSAANDKIALLESKLEEVEKSNTLLYEQMRFRDHYQKHVEPSSSHLQTAAAYENSISPFASFRKKEAERAYSRMGSFERIVYALLRTLLFSRATRGLFFMYLILLHLFIMIVLLKLGIAGNTAYTPMNY.

Topologically, residues 1–601 (MAVASEALLQ…LLFSRATRGL (601 aa)) are cytoplasmic. Residues 39–60 (QKTSLDERKELSSKTKEFRKQP) form a disordered region. 2 coiled-coil regions span residues 111 to 339 (IEAA…LANK) and 369 to 433 (SLES…VDVE). A helical; Anchor for type IV membrane protein transmembrane segment spans residues 602-622 (FFMYLILLHLFIMIVLLKLGI). The Lumenal segment spans residues 623-633 (AGNTAYTPMNY).

This sequence belongs to the CASP family.

It localises to the golgi apparatus membrane. Its function is as follows. May be involved in intra-Golgi transport. This chain is Protein CASP (coy1), found in Schizosaccharomyces pombe (strain 972 / ATCC 24843) (Fission yeast).